The sequence spans 319 residues: MFDDLSNYRPANPALWQGRKDTANQERFFQKITFIDNQNELMTKDKKTIFLGFASDAGIKRNLGRTGAKLGPDQIKTQLAKLPCHNNKHYVDLGNVICENDELELSQSQFAQIVHFCHENGHQICAFGGGHEIAWAHYQGLSSLYPKLGVINFDAHFDLRPYKKGELGNSGTPFSQIATYCEEKKMPFHYCCIGVQKFGNTPSLFEKAKKLNVSYLSAEDLYEQSQAWQIAFLDDFILNLDHIYLTICLDVLAECYAPGVSAPQALGLSPWQIMPLLKYLIQSGKVVSLDIAELSPPLDSELKTARLAALIIAELLDTN.

Residues His-131, Asp-154, His-156, Asp-158, Cys-248, and Asp-250 each contribute to the Mn(2+) site.

It belongs to the arginase family. It depends on Mn(2+) as a cofactor.

The catalysed reaction is N-formimidoyl-L-glutamate + H2O = formamide + L-glutamate. Its pathway is amino-acid degradation; L-histidine degradation into L-glutamate; L-glutamate from N-formimidoyl-L-glutamate (hydrolase route): step 1/1. Catalyzes the conversion of N-formimidoyl-L-glutamate to L-glutamate and formamide. This is Formimidoylglutamase from Legionella pneumophila (strain Lens).